The following is a 402-amino-acid chain: Nicotinate phosphoribosyltransferase (402 aa).

The residue at position 224 (His224) is a Phosphohistidine; by autocatalysis.

Belongs to the NAPRTase family. Transiently phosphorylated on a His residue during the reaction cycle. Phosphorylation strongly increases the affinity for substrates and increases the rate of nicotinate D-ribonucleotide production. Dephosphorylation regenerates the low-affinity form of the enzyme, leading to product release.

It carries out the reaction nicotinate + 5-phospho-alpha-D-ribose 1-diphosphate + ATP + H2O = nicotinate beta-D-ribonucleotide + ADP + phosphate + diphosphate. The protein operates within cofactor biosynthesis; NAD(+) biosynthesis; nicotinate D-ribonucleotide from nicotinate: step 1/1. Functionally, catalyzes the synthesis of beta-nicotinate D-ribonucleotide from nicotinate and 5-phospho-D-ribose 1-phosphate at the expense of ATP. The polypeptide is Nicotinate phosphoribosyltransferase (Neisseria meningitidis serogroup A / serotype 4A (strain DSM 15465 / Z2491)).